We begin with the raw amino-acid sequence, 1543 residues long: ATP-binding cassette sub-family C member 2 (1543 aa).

Over 1–26 the chain is Extracellular; it reads MDEFCNSTFWNLSLLKSPEADLPLCF. Residues N6 and N11 are each glycosylated (N-linked (GlcNAc...) asparagine). Residues 27 to 47 traverse the membrane as a helical segment; the sequence is EQTVLVWIPLGFLWLLAPWQL. At 48 to 67 the chain is on the cytoplasmic side; sequence YRIYRSRTKRFAITKFYLAK. A helical membrane pass occupies residues 68-88; sequence QVFVVCLLILAAIDLSLALTE. Residues 89–92 are Extracellular-facing; the sequence is DTGQ. Residues 93–113 traverse the membrane as a helical segment; the sequence is ATIPPVKYTNPILYLCTWLLV. Over 114-125 the chain is Cytoplasmic; the sequence is LVIQHCRQCCIQ. A helical transmembrane segment spans residues 126–146; sequence KNSWFLSMFWILSLLCGIFQF. Over 147 to 164 the chain is Extracellular; sequence QTLIRALLQDSKSNMTYS. N-linked (GlcNAc...) asparagine glycosylation is present at N160. The helical transmembrane segment at 165 to 185 threads the bilayer; it reads CLFFVSYGFQIVILILSAFSE. Residues 186-311 lie on the Cytoplasmic side of the membrane; sequence SSDSTHAPSA…DFPKSWLVKA (126 aa). A disordered region spans residues 260–285; that stretch reads LKKSQQSPEGTSHGLTKKQSQSQDVL. Residues 263 to 283 are compositionally biased toward polar residues; the sequence is SQQSPEGTSHGLTKKQSQSQD. Phosphoserine is present on residues S279 and S281. A helical transmembrane segment spans residues 312–332; it reads LFKTFYVVILKSFILKLAHDI. Residues 320–603 form the ABC transmembrane type-1 1 domain; it reads ILKSFILKLA…LPMVISSVIQ (284 aa). The Extracellular portion of the chain corresponds to 333–358; that stretch reads LLFLNPQLLKFLIGFVKDPDSYPWVG. The helical transmembrane segment at 359–379 threads the bilayer; that stretch reads YIYAILMFSVTLIQSFFLQCY. Residues 380 to 435 are Cytoplasmic-facing; sequence FQFCFVLGMTVRTTIIASVYKKALTLSNLARRQYTIGETVNLMSVDSQKLMDVTNY. Residues 436–456 form a helical membrane-spanning segment; it reads IHLLWSSVLQIALSIFFLWRE. At 457–459 the chain is on the extracellular side; sequence LGP. Residues 460–480 form a helical membrane-spanning segment; it reads SILAGVGLMVLLVPVNGVLAT. Residues 481–542 are Cytoplasmic-facing; the sequence is KIRKIQVQNM…NLLRFSQLQT (62 aa). A helical membrane pass occupies residues 543–563; sequence ILIFILHLTPTLVSVITFSVY. Topologically, residues 564 to 585 are extracellular; sequence VLVDSQNVLNAEKAFTSITLFN. The helical transmembrane segment at 586 to 606 threads the bilayer; that stretch reads ILRFPLAMLPMVISSVIQASV. The Cytoplasmic portion of the chain corresponds to 607-969; the sequence is SVDRLEQYLG…VKFSIYLKYL (363 aa). The 225-residue stretch at 635-859 folds into the ABC transporter 1 domain; sequence VQFSEASFTW…KGVFAKNWKT (225 aa). 669–676 contacts ATP; that stretch reads GTVGSGKS. Position 876 is a phosphoserine (S876). The segment at 903–927 is disordered; sequence RENSLRRTLSRSSRSGSRRGKSLKS. The span at 908–917 shows a compositional bias: low complexity; that stretch reads RRTLSRSSRS. A phosphoserine mark is found at S924 and S928. A helical membrane pass occupies residues 970–990; the sequence is QAVGWWSLLFIVIFYVLNYVA. Residues 977 to 1262 enclose the ABC transmembrane type-1 2 domain; sequence LLFIVIFYVL…LVRMTSEVET (286 aa). Residues 991 to 1031 are Extracellular-facing; that stretch reads FIGTNLWLSAWTSDSEKQNGTDNSPSQRDMRIGVFGALGIA. N-linked (GlcNAc...) asparagine glycosylation occurs at N1009. A helical membrane pass occupies residues 1032-1052; that stretch reads QGIFLLSSSLWSIYACRNASK. Residues 1053–1095 are Cytoplasmic-facing; the sequence is TLHRQLLTNILRAPMSFFDTTPTGRIVNRFAGDISTVDDTLPQ. A helical membrane pass occupies residues 1096-1116; sequence TLRSWLLCFFGIVSTLVMICM. Position 1117 (A1117) is a topological domain, extracellular. A helical transmembrane segment spans residues 1118–1138; it reads TPIFIIIIIPLSILYVSVQVF. At 1139–1209 the chain is on the cytoplasmic side; sequence YVATSRQLRR…TSNRWLAIRL (71 aa). Residues 1210–1230 form a helical membrane-spanning segment; that stretch reads ELVGNLIVFCSALLLVIYKNS. The Extracellular segment spans residues 1231–1232; the sequence is LT. A helical membrane pass occupies residues 1233–1253; sequence GDTVGFVLSNALNITQTLNWL. At 1254-1543 the chain is on the cytoplasmic side; the sequence is VRMTSEVETN…GIESVNHTEL (290 aa). The ABC transporter 2 domain maps to 1298–1532; the sequence is IQFNNYQVRY…MGPFYLMAKE (235 aa). 1332 to 1339 is a binding site for ATP; sequence GRTGAGKS. S1436 bears the Phosphoserine mark.

The protein belongs to the ABC transporter superfamily. ABCC family. Conjugate transporter (TC 3.A.1.208) subfamily. Expressed in liver.

It is found in the apical cell membrane. The enzyme catalyses an S-substituted glutathione(in) + ATP + H2O = an S-substituted glutathione(out) + ADP + phosphate + H(+). The catalysed reaction is taurolithocholate 3-sulfate(in) + ATP + H2O = taurolithocholate 3-sulfate(out) + ADP + phosphate + H(+). It catalyses the reaction ATP + H2O + xenobioticSide 1 = ADP + phosphate + xenobioticSide 2.. It carries out the reaction leukotriene C4(in) + ATP + H2O = leukotriene C4(out) + ADP + phosphate + H(+). The enzyme catalyses 17beta-estradiol 17-O-(beta-D-glucuronate)(in) + ATP + H2O = 17beta-estradiol 17-O-(beta-D-glucuronate)(out) + ADP + phosphate + H(+). The catalysed reaction is (4Z,15Z)-bilirubin IXalpha C8-beta-D-glucuronoside(in) + ATP + H2O = (4Z,15Z)-bilirubin IXalpha C8-beta-D-glucuronoside(out) + ADP + phosphate + H(+). It catalyses the reaction (4Z,15Z)-bilirubin IXalpha C8,C12-beta-D-bisglucuronoside(in) + ATP + H2O = (4Z,15Z)-bilirubin IXalpha C8,C12-beta-D-bisglucuronoside(out) + ADP + phosphate + H(+). In terms of biological role, ATP-dependent transporter of the ATP-binding cassette (ABC) family that binds and hydrolyzes ATP to enable active transport of various substrates including many drugs, toxicants and endogenous compound across cell membranes. Transports a wide variety of conjugated organic anions such as sulfate-, glucuronide- and glutathione (GSH)-conjugates of endo- and xenobiotics substrates. Mediates hepatobiliary excretion of mono- and bis-glucuronidated bilirubin molecules and therefore play an important role in bilirubin detoxification. Mediates also hepatobiliary excretion of others glucuronide conjugates such as 17beta-estradiol 17-glucosiduronic acid and leukotriene C4. Transports sulfated bile salt such as taurolithocholate sulfate. Transports various anticancer drugs, such as anthracycline, vinca alkaloid and methotrexate and HIV-drugs such as protease inhibitors. The sequence is that of ATP-binding cassette sub-family C member 2 from Mus musculus (Mouse).